A 210-amino-acid polypeptide reads, in one-letter code: Large ribosomal subunit protein uL3 (210 aa).

This sequence belongs to the universal ribosomal protein uL3 family. Part of the 50S ribosomal subunit. Forms a cluster with proteins L14 and L19.

Functionally, one of the primary rRNA binding proteins, it binds directly near the 3'-end of the 23S rRNA, where it nucleates assembly of the 50S subunit. The polypeptide is Large ribosomal subunit protein uL3 (Natranaerobius thermophilus (strain ATCC BAA-1301 / DSM 18059 / JW/NM-WN-LF)).